The following is a 299-amino-acid chain: MVPVLLALLLLLGPAVSEETQAGNYSLSFLYTGLSKPREGFPSFQAVAYLNDQPFFHYNSEGRRAEPLAPWSQVEGMEDWEKESALQRAREDIFMETLSDIMDYYKDREGSHTFQGAFGCELRNNESSGAFWGYAYDGQDFIKFDKEIPAWVPLDPAAQNTKRKWEAEAVYVQRAKAYLEEECPGMLRRYLPYSRTHLDRQESPSVSVTGHAAPGHKRTLKCLAYDFYPRSIGLHWTRAGDAQEAESGGDVLPSGNGTYQSWVVVGVPPEDQAPYSCHVEHRSLTRPLTVPWDPRQQAE.

The N-terminal stretch at 1–17 (MVPVLLALLLLLGPAVS) is a signal peptide. N-linked (GlcNAc...) asparagine glycosylation is found at Asn24, Asn125, and Asn256. 2 disulfide bridges follow: Cys120-Cys183 and Cys222-Cys277. The region spanning 204–289 (PSVSVTGHAA…EHRSLTRPLT (86 aa)) is the Ig-like C1-type domain.

It belongs to the MHC class I family. Interacts with PIP.

The protein localises to the secreted. Stimulates lipid degradation in adipocytes and causes the extensive fat losses associated with some advanced cancers. The protein is Zinc-alpha-2-glycoprotein (AZGP1) of Bos taurus (Bovine).